We begin with the raw amino-acid sequence, 152 residues long: MAKRVQVVLNESINKLGKDGDLVEVAPGYARNYLLPQKLATLATPGILKQVEQRREKERQRLLAEKQQAEGQKTALETIKRFTIRKEVGEGEAIFGTVTTSEVAEAIQAATNQEVDRKGITVPDINKTGFYEATVKLHPEVTATIEIQVAPL.

Belongs to the bacterial ribosomal protein bL9 family.

Its function is as follows. Binds to the 23S rRNA. This chain is Large ribosomal subunit protein bL9, found in Crocosphaera subtropica (strain ATCC 51142 / BH68) (Cyanothece sp. (strain ATCC 51142)).